Reading from the N-terminus, the 715-residue chain is Serine/arginine repetitive matrix protein 5 (715 aa).

Low complexity predominate over residues 1–13 (MSSPKRSSKPSMS). The interval 1–715 (MSSPKRSSKP…RSSSSSSKLA (715 aa)) is disordered. Residues 32 to 59 (LKSTKSATPNRSLVPTKPATSRNSVMSP) are compositionally biased toward polar residues. Positions 60–79 (SSSKSTKSTSTKRAPSNRPS) are enriched in low complexity. Residues 80-90 (SRSRVRSKART) show a composition bias toward basic residues. Residues 92–104 (SRVSTDTRTSKAS) are compositionally biased toward polar residues. The span at 112 to 136 (HQRRGTHSRGRTPGRRGSRSSKRSP) shows a compositional bias: basic residues. 2 stretches are compositionally biased toward polar residues: residues 213–224 (TPSTAKCQTPTG) and 257–272 (YSPT…YNQA). Residues 273–285 (STRSRPQSHSQSR) are compositionally biased toward low complexity. Basic residues predominate over residues 286-320 (SPRRSRSGSQKRTHSRVRSHSWKRNHSRARSRTRK). Composition is skewed to basic and acidic residues over residues 359-388 (PSKE…KESG) and 397-521 (KQRD…ERDH). Positions 522–536 (RRSRSPSKERQRRQS) are enriched in basic residues. Composition is skewed to basic and acidic residues over residues 539 to 595 (PNKE…DHSR) and 611 to 628 (SSKE…KEGN). The span at 657 to 666 (TRTSSLSQNR) shows a compositional bias: polar residues. Positions 667–681 (TPSKTSSHSPSTFPS) are enriched in low complexity. Polar residues predominate over residues 682–715 (GGQTLSQDDSQADATTSKATLPGERSSSSSSKLA).

The polypeptide is Serine/arginine repetitive matrix protein 5 (SRRM5) (Homo sapiens (Human)).